The chain runs to 1387 residues: Dicer-like protein 2-1 (1387 aa).

The Helicase ATP-binding domain occupies 26 to 205; sequence MFEASLKENI…LLKIESNLDA (180 aa). An ATP-binding site is contributed by 39–46; sequence MGTGSGKT. The DEAH box signature appears at 146–149; it reads DEAH. The Helicase C-terminal domain occupies 370 to 535; the sequence is KFRSLLEFLD…AYEDDERRLR (166 aa). A Dicer dsRNA-binding fold domain is found at 565 to 659; it reads AVAHLNHFCA…LPFKRNLELK (95 aa). RNase III domains follow at residues 915-1055 and 1094-1277; these read ATRL…IDGG and DDHL…IDSH. Mg(2+)-binding residues include glutamate 1133, aspartate 1263, and glutamate 1266.

This sequence belongs to the helicase family. Dicer subfamily. It depends on Mg(2+) as a cofactor. Requires Mn(2+) as cofactor.

Dicer-like endonuclease involved in cleaving double-stranded RNA in the RNA interference (RNAi) pathway. Produces 21 to 25 bp dsRNAs (siRNAs) which target the selective destruction of homologous RNAs leading to sequence-specific suppression of gene expression, called post-transcriptional gene silencing (PTGS). Part of a broad host defense response against viral infection and transposons. This is Dicer-like protein 2-1 (dcl2-1) from Aspergillus niger (strain ATCC MYA-4892 / CBS 513.88 / FGSC A1513).